The primary structure comprises 405 residues: Phosphoglycerate kinase (405 aa).

Substrate-binding positions include 24–26 (DFN), R40, 63–66 (HLGR), R122, and R162. Residues K212, E331, and 361–364 (GGDS) each bind ATP.

Belongs to the phosphoglycerate kinase family. As to quaternary structure, monomer.

It localises to the cytoplasm. The catalysed reaction is (2R)-3-phosphoglycerate + ATP = (2R)-3-phospho-glyceroyl phosphate + ADP. Its pathway is carbohydrate degradation; glycolysis; pyruvate from D-glyceraldehyde 3-phosphate: step 2/5. The chain is Phosphoglycerate kinase (pgk) from Corynebacterium glutamicum (strain ATCC 13032 / DSM 20300 / JCM 1318 / BCRC 11384 / CCUG 27702 / LMG 3730 / NBRC 12168 / NCIMB 10025 / NRRL B-2784 / 534).